A 114-amino-acid chain; its full sequence is MHELSIAHNIVNIASAAAAEAGTEEISAVYLRIGALAGVVADALRFSFAIAAEGTPLANAELIIEEVPVTVFCPTCNTEVTLPNPRLFRCPHCGRPCGQIIHGRELELVALETP.

His-2 provides a ligand contact to Ni(2+). Cys-73, Cys-76, Cys-90, and Cys-93 together coordinate Zn(2+).

The protein belongs to the HypA/HybF family.

Functionally, involved in the maturation of [NiFe] hydrogenases. Required for nickel insertion into the metal center of the hydrogenase. The protein is Hydrogenase maturation factor HypA of Chloroflexus aggregans (strain MD-66 / DSM 9485).